We begin with the raw amino-acid sequence, 236 residues long: Biosynthetic peptidoglycan transglycosylase (236 aa).

Residues 20–40 (GLVVAAVLALIPTMLTFLYLP) traverse the membrane as a helical segment.

The protein belongs to the glycosyltransferase 51 family.

It is found in the cell inner membrane. The catalysed reaction is [GlcNAc-(1-&gt;4)-Mur2Ac(oyl-L-Ala-gamma-D-Glu-L-Lys-D-Ala-D-Ala)](n)-di-trans,octa-cis-undecaprenyl diphosphate + beta-D-GlcNAc-(1-&gt;4)-Mur2Ac(oyl-L-Ala-gamma-D-Glu-L-Lys-D-Ala-D-Ala)-di-trans,octa-cis-undecaprenyl diphosphate = [GlcNAc-(1-&gt;4)-Mur2Ac(oyl-L-Ala-gamma-D-Glu-L-Lys-D-Ala-D-Ala)](n+1)-di-trans,octa-cis-undecaprenyl diphosphate + di-trans,octa-cis-undecaprenyl diphosphate + H(+). It participates in cell wall biogenesis; peptidoglycan biosynthesis. Its function is as follows. Peptidoglycan polymerase that catalyzes glycan chain elongation from lipid-linked precursors. The chain is Biosynthetic peptidoglycan transglycosylase from Mesorhizobium japonicum (strain LMG 29417 / CECT 9101 / MAFF 303099) (Mesorhizobium loti (strain MAFF 303099)).